A 480-amino-acid polypeptide reads, in one-letter code: Glycerol-3-phosphate transporter (480 aa).

The Cytoplasmic portion of the chain corresponds to Met-1 to Phe-36. Residues Gly-37–Gln-57 traverse the membrane as a helical segment. The Periplasmic portion of the chain corresponds to Ala-58–Ala-64. Residues Glu-65–Ala-85 traverse the membrane as a helical segment. Over Gly-86–Arg-94 the chain is Cytoplasmic. The chain crosses the membrane as a helical span at residues Val-95–Leu-113. Residues Phe-114–Ile-121 lie on the Periplasmic side of the membrane. Residues Ala-122 to Cys-142 form a helical membrane-spanning segment. At Gly-143–Ile-161 the chain is on the cytoplasmic side. Residues Trp-162–Ser-181 form a helical membrane-spanning segment. Over Ala-182–Ser-201 the chain is Periplasmic. The helical transmembrane segment at Leu-202–Val-219 threads the bilayer. At Met-220–Ala-274 the chain is on the cytoplasmic side. Residues Asn-275–Glu-295 form a helical membrane-spanning segment. Residues Val-296–Asn-300 are Periplasmic-facing. Residues Ile-301 to Leu-321 traverse the membrane as a helical segment. Residues Cys-322–Arg-334 lie on the Cytoplasmic side of the membrane. Residues Gly-335–Met-354 form a helical membrane-spanning segment. Over Asn-355–Pro-359 the chain is Periplasmic. The chain crosses the membrane as a helical span at residues Glu-360–Ile-396. The Cytoplasmic segment spans residues Gly-397 to Phe-415. A helical membrane pass occupies residues Thr-416–Gln-437. The Periplasmic portion of the chain corresponds to His-438–Asp-442. Residues Gly-443–Met-463 traverse the membrane as a helical segment. At Val-464–Thr-479 the chain is on the cytoplasmic side.

The protein belongs to the major facilitator superfamily. Organophosphate:Pi antiporter (OPA) (TC 2.A.1.4) family.

Its subcellular location is the cell inner membrane. Its function is as follows. Responsible for glycerol-3-phosphate uptake. This chain is Glycerol-3-phosphate transporter (glpT), found in Haemophilus influenzae (strain ATCC 51907 / DSM 11121 / KW20 / Rd).